The sequence spans 437 residues: tRNA-2-methylthio-N(6)-dimethylallyladenosine synthase (437 aa).

One can recognise an MTTase N-terminal domain in the interval Met1–Ala115. 6 residues coordinate [4Fe-4S] cluster: Cys10, Cys46, Cys78, Cys148, Cys152, and Cys155. A Radical SAM core domain is found at Lys134–Glu367. One can recognise a TRAM domain in the interval Lys370–Gly436.

It belongs to the methylthiotransferase family. MiaB subfamily. Monomer. Requires [4Fe-4S] cluster as cofactor.

Its subcellular location is the cytoplasm. The catalysed reaction is N(6)-dimethylallyladenosine(37) in tRNA + (sulfur carrier)-SH + AH2 + 2 S-adenosyl-L-methionine = 2-methylsulfanyl-N(6)-dimethylallyladenosine(37) in tRNA + (sulfur carrier)-H + 5'-deoxyadenosine + L-methionine + A + S-adenosyl-L-homocysteine + 2 H(+). In terms of biological role, catalyzes the methylthiolation of N6-(dimethylallyl)adenosine (i(6)A), leading to the formation of 2-methylthio-N6-(dimethylallyl)adenosine (ms(2)i(6)A) at position 37 in tRNAs that read codons beginning with uridine. In Helicobacter pylori (strain ATCC 700392 / 26695) (Campylobacter pylori), this protein is tRNA-2-methylthio-N(6)-dimethylallyladenosine synthase.